Here is a 495-residue protein sequence, read N- to C-terminus: Sorting nexin-4 (495 aa).

Low complexity predominate over residues 20 to 31 (GAGSSAAHQHGG). Positions 20-51 (GAGSSAAHQHGGQESEQPTHNQAEPEPNYTSM) are disordered. One can recognise a PX domain in the interval 62 to 184 (VLECNVSSPL…TFLESPDWNA (123 aa)). 4 residues coordinate a 1,2-diacyl-sn-glycero-3-phospho-(1D-myo-inositol-3-phosphate): Arg-105, Thr-107, Lys-131, and Arg-150. Low complexity predominate over residues 193 to 207 (SVSMSGTSSGESGNA). Positions 193–219 (SVSMSGTSSGESGNAHYGGGSAGGGST) are disordered. Residues 208–219 (HYGGGSAGGGST) show a composition bias toward gly residues. The stretch at 406-443 (DHEQSRRERLRKLELRIEELTVEVERAKKTSELFDEEV) forms a coiled coil.

Belongs to the sorting nexin family.

The protein resides in the cytoplasm. Its subcellular location is the cytosol. The protein localises to the preautophagosomal structure membrane. It localises to the endosome membrane. It is found in the mitochondrion membrane. The protein resides in the lipid droplet. In terms of biological role, sorting nexin, involved in the separation or division of vacuoles throughout the entire life cycle of the cells. Involved in retrieval of late-Golgi SNAREs from post-Golgi endosomes to the trans-Golgi network, for cytoplasm to vacuole transport (Cvt), and autophagy of large cargos including mitophagy, pexophagy and glycophagy. Required for invasion of the rice sheath. In Pyricularia oryzae (strain 70-15 / ATCC MYA-4617 / FGSC 8958) (Rice blast fungus), this protein is Sorting nexin-4 (SNX4).